A 976-amino-acid polypeptide reads, in one-letter code: LRR receptor-like serine/threonine-protein kinase ERECTA (976 aa).

The signal sequence occupies residues 1 to 24; sequence MALFRDIVLLGFLFCLSLVATVTS. Topologically, residues 25 to 580 are extracellular; the sequence is EEGATLLEIK…RRTVRVSISR (556 aa). Residues Asn-65 and Asn-74 are each glycosylated (N-linked (GlcNAc...) asparagine). 20 LRR repeats span residues 69–92, 93–115, 117–140, 141–163, 165–187, 189–212, 213–235, 237–259, 260–282, 284–306, 308–330, 332–355, 356–379, 380–401, 404–425, 428–449, 452–473, 476–498, 500–522, and 523–545; these read NVVALNLSDLNLDGEISPAIGDLK, SLLSIDLRGNRLSGQIPDEIGDC, SLQNLDLSFNELSGDIPFSISKLK, QLEQLILKNNQLIGPIPSTLSQI, NLKILDLAQNKLSGEIPRLIYWN, VLQYLGLRGNNLVGNISPDLCQLT, GLWYFDVRNNSLTGSIPETIGNC, AFQVLDLSYNQLTGEIPFDIGFL, QVATLSLQGNQLSGKIPSVIGLM, ALAVLDLSGNLLSGSIPPILGNL, FTEKLYLHSNKLTGSIPPELGNM, KLHYLELNDNHLTGHIPPELGKLT, DLFDLNVANNDLEGPIPDHLSSCT, NLNSLNVHGNKFSGTIPRAFQK, SMTYLNLSSNNIKGPIPVELSR, NLDTLDLSNNKINGIIPSSLGD, HLLKMNLSRNHITGVVPGDFGN, SIMEIDLSNNDISGPIPEELNQL, NIILLRLENNNLTGNVGSLANCL, and SLTVLNVSHNNLVGDIPKNNNFS. Asn-221 and Asn-234 each carry an N-linked (GlcNAc...) asparagine glycan. Asn-305 and Asn-329 each carry an N-linked (GlcNAc...) asparagine glycan. Residue Asn-409 is glycosylated (N-linked (GlcNAc...) asparagine). Residue Asn-457 is glycosylated (N-linked (GlcNAc...) asparagine). Residues Asn-510, Asn-528, and Asn-543 are each glycosylated (N-linked (GlcNAc...) asparagine). Residues 581–601 traverse the membrane as a helical segment; sequence AAILGIAIGGLVILLMVLIAA. Residues 602–976 lie on the Cytoplasmic side of the membrane; sequence CRPHNPPPFL…FGQVISQNSE (375 aa). Thr-645 is subject to Phosphothreonine. Residues 648 to 918 enclose the Protein kinase domain; it reads LSEKYIIGHG…QVTRVLGSFM (271 aa). ATP-binding positions include 654 to 662 and Lys-676; that span reads IGHGASSTV. Phosphotyrosine is present on residues Tyr-721 and Tyr-760. The active-site Proton acceptor is Asp-773. A Phosphotyrosine modification is found at Tyr-815. The residue at position 823 (Thr-823) is a Phosphothreonine.

The protein belongs to the protein kinase superfamily. Ser/Thr protein kinase family. In terms of assembly, homodimer and heterodimer with ERL1 and TMM. Interacts with EPF1, EPF2, EPFL4, EPFL5 and EPFL6. Interacts with SERK1, SERK2, SERK3/BAK1 and SERK4 in a EPF2-induced manner. Interacts with EPFL9/STOMAGEN. Mostly expressed in shoot apical meristems (SAM), organ primordia, flowers, siliques and young rosette leaves, and, to a lower extent, in stems and cauline leaves. Expressed in growing inflorescence stems and pedicels. Detected in epidermis, phloem and xylem.

The protein resides in the cell membrane. The enzyme catalyses L-seryl-[protein] + ATP = O-phospho-L-seryl-[protein] + ADP + H(+). It carries out the reaction L-threonyl-[protein] + ATP = O-phospho-L-threonyl-[protein] + ADP + H(+). In terms of biological role, receptor kinase that, together with ERL1 and ERL2, regulates aerial architecture, including inflorescence (e.g. shoot apical meristem-originating organ shape, elongation of the internode and pedicels, and adaxial-abaxial polarity), and stomatal patterning (e.g. density and clustering), probably by tuning cell division and expansion. Redundantly involved with ERL1 in procambial development regulation. Forms a functional ligand-receptor pair with EPF2 (AC Q8LC53). Modulates plant transpiration efficiency by controlling stomatal density, leaf photosynthetic capacity, epidermal cell expansion, mesophyll cell proliferation and cell-cell contact. A phloem-specific expression of ER is sufficient for proper inflorescence architecture. Probable major trait regulating canalization (maintenance of phenotype despite varying environment) in many aspect of the plant physiology (e.g. plant morphology, light-dependent leaves number, branch number, flowering time, phytate and mineral concentrations) by transducing microenvironmental variation into phenotypic differentiation (ecological amplifier). May maintain development integrity in heat stress conditions. Regulates cell wall composition and structure. Confers resistance to the pathogenic bacteria Ralstonia solanacearum and to the necrotrophic fungi Plectosphaerella cucumerina and Pythium irregulare, and required for callose deposition upon infection. Resistance to P.cucumerina seems cell wall-mediated. Forms a constitutive complex with TMM involved in the recognition of the stomatal regulatory peptides EPF1, EPF2 and EPFL9/STOMAGEN. This is LRR receptor-like serine/threonine-protein kinase ERECTA from Arabidopsis thaliana (Mouse-ear cress).